The chain runs to 106 residues: Large ribosomal subunit protein uL24 (106 aa).

Belongs to the universal ribosomal protein uL24 family. As to quaternary structure, part of the 50S ribosomal subunit.

One of two assembly initiator proteins, it binds directly to the 5'-end of the 23S rRNA, where it nucleates assembly of the 50S subunit. Its function is as follows. One of the proteins that surrounds the polypeptide exit tunnel on the outside of the subunit. This is Large ribosomal subunit protein uL24 from Blochmanniella pennsylvanica (strain BPEN).